The primary structure comprises 424 residues: Na(+), Li(+), K(+)/H(+) antiporter (424 aa).

12 helical membrane passes run 15–35 (VGEFFMNTSFWMVFPFLAIYF), 42–62 (GLAGMLLIISQIFSVAANLFG), 74–94 (MLVSAAVAQGFAFLLFALANS), 105–125 (VAFTLAGMCGSLYWPASQAMI), 141–161 (FYTTLNIAVVIGPLFGAVLFF), 165–185 (FELLLTVAIISVLLGLLLRFY), 227–247 (LLFVIAGILGAQTFMQLDLVI), 274–294 (TSFGILLAENGLIVALLTVVI), 305–325 (WVFFFSALLFGLSMAIFPMTS), 327–347 (FWIFFVAMAVFTFAELMVVGL), 367–389 (AASLRYTIGRMIAPISIPMTAWF), and 393–415 (WTFIILGSFAVLSGFVYLWMFHL).

Belongs to the major facilitator superfamily.

The protein resides in the cell membrane. With respect to regulation, norfloxacin transport is inhibited by CCCP. Functionally, exhibits dual functions as a Na(+)(Li(+)/K(+))/H(+) antiporter and a multidrug efflux pump. Catalyzes the efflux of Na(+), Li(+) and K(+) in exchange for external protons. Shows a preference for Na(+), followed by K(+) and Li(+). Can also function as a multidrug efflux pump. Transports ethidium bromide and norfloxacin. The polypeptide is Na(+), Li(+), K(+)/H(+) antiporter (Planococcus maritimus).